The primary structure comprises 78 residues: Large ribosomal subunit protein bL28 (78 aa).

It belongs to the bacterial ribosomal protein bL28 family.

The protein is Large ribosomal subunit protein bL28 of Synechococcus sp. (strain CC9605).